The following is a 198-amino-acid chain: MIALLTGQIAQKSPDHIILDVNGVGYRVQIPFSTYYDLPEEGTVSLHIHTSVREDAIQLYGFRTSLEKSFFQLLLSVSGVGPRLARDILSNIQPAQLAQALGQGDIRMLSAVPGIGKKTAERLVLELKEKVGKLDLSSVVVPEPRQMPEDDLLEDVVSALLNLGYKEPQVRKVLAGLNPGSDASLEGVLKQALKSLMR.

Residues 1 to 63 are domain I; it reads MIALLTGQIA…EDAIQLYGFR (63 aa). A domain II region spans residues 64–142; the sequence is TSLEKSFFQL…KLDLSSVVVP (79 aa). The interval 143 to 153 is flexible linker; sequence EPRQMPEDDLL. Residues 153–198 form a domain III region; it reads LEDVVSALLNLGYKEPQVRKVLAGLNPGSDASLEGVLKQALKSLMR.

The protein belongs to the RuvA family. Homotetramer. Forms an RuvA(8)-RuvB(12)-Holliday junction (HJ) complex. HJ DNA is sandwiched between 2 RuvA tetramers; dsDNA enters through RuvA and exits via RuvB. An RuvB hexamer assembles on each DNA strand where it exits the tetramer. Each RuvB hexamer is contacted by two RuvA subunits (via domain III) on 2 adjacent RuvB subunits; this complex drives branch migration. In the full resolvosome a probable DNA-RuvA(4)-RuvB(12)-RuvC(2) complex forms which resolves the HJ.

The protein localises to the cytoplasm. In terms of biological role, the RuvA-RuvB-RuvC complex processes Holliday junction (HJ) DNA during genetic recombination and DNA repair, while the RuvA-RuvB complex plays an important role in the rescue of blocked DNA replication forks via replication fork reversal (RFR). RuvA specifically binds to HJ cruciform DNA, conferring on it an open structure. The RuvB hexamer acts as an ATP-dependent pump, pulling dsDNA into and through the RuvAB complex. HJ branch migration allows RuvC to scan DNA until it finds its consensus sequence, where it cleaves and resolves the cruciform DNA. This is Holliday junction branch migration complex subunit RuvA from Pelobacter propionicus (strain DSM 2379 / NBRC 103807 / OttBd1).